We begin with the raw amino-acid sequence, 347 residues long: Aspartate-semialdehyde dehydrogenase (347 aa).

NADP(+)-binding positions include 10–13 (TGMV) and 37–38 (RS). Residue R108 coordinates phosphate. C147 serves as the catalytic Acyl-thioester intermediate. Q174 contributes to the substrate binding site. 177-178 (SG) contacts NADP(+). E200 is a binding site for substrate. K203 contacts phosphate. R233 contributes to the substrate binding site. H240 serves as the catalytic Proton acceptor. Residues 276-299 (APEKPVVVRDEENRPQPRMDRDMD) form a disordered region. Residues 281–299 (VVVRDEENRPQPRMDRDMD) show a composition bias toward basic and acidic residues. Residue 327 to 328 (NT) participates in NADP(+) binding.

Belongs to the aspartate-semialdehyde dehydrogenase family. Homodimer.

The catalysed reaction is L-aspartate 4-semialdehyde + phosphate + NADP(+) = 4-phospho-L-aspartate + NADPH + H(+). Its pathway is amino-acid biosynthesis; L-lysine biosynthesis via DAP pathway; (S)-tetrahydrodipicolinate from L-aspartate: step 2/4. It functions in the pathway amino-acid biosynthesis; L-methionine biosynthesis via de novo pathway; L-homoserine from L-aspartate: step 2/3. The protein operates within amino-acid biosynthesis; L-threonine biosynthesis; L-threonine from L-aspartate: step 2/5. Catalyzes the NADPH-dependent formation of L-aspartate-semialdehyde (L-ASA) by the reductive dephosphorylation of L-aspartyl-4-phosphate. In Methanothermobacter thermautotrophicus (strain ATCC 29096 / DSM 1053 / JCM 10044 / NBRC 100330 / Delta H) (Methanobacterium thermoautotrophicum), this protein is Aspartate-semialdehyde dehydrogenase.